The primary structure comprises 95 residues: Alpha-defensin 20 (95 aa).

The signal sequence occupies residues 1–19; that stretch reads MKTLVLLSALVLLAFQVQA. A propeptide spanning residues 20-58 is cleaved from the precursor; that stretch reads DPIQNTDEETNTEEQPGEEDQAVSVSFGDPEGSALHEKS. Positions 22–57 are disordered; the sequence is IQNTDEETNTEEQPGEEDQAVSVSFGDPEGSALHEK. Residues 25 to 40 show a composition bias toward acidic residues; that stretch reads TDEETNTEEQPGEEDQ. Intrachain disulfides connect cysteine 64-cysteine 89, cysteine 66-cysteine 81, and cysteine 71-cysteine 88.

It belongs to the alpha-defensin family.

The protein localises to the secreted. Functionally, may have microbicidal activities. This is Alpha-defensin 20 (Defa20) from Mus musculus (Mouse).